A 418-amino-acid polypeptide reads, in one-letter code: Light-independent protochlorophyllide reductase subunit N (418 aa).

The [4Fe-4S] cluster site is built by Cys-17, Cys-42, and Cys-103.

This sequence belongs to the BchN/ChlN family. Protochlorophyllide reductase is composed of three subunits; ChlL, ChlN and ChlB. Forms a heterotetramer of two ChlB and two ChlN subunits. [4Fe-4S] cluster serves as cofactor.

It catalyses the reaction chlorophyllide a + oxidized 2[4Fe-4S]-[ferredoxin] + 2 ADP + 2 phosphate = protochlorophyllide a + reduced 2[4Fe-4S]-[ferredoxin] + 2 ATP + 2 H2O. Its pathway is porphyrin-containing compound metabolism; chlorophyll biosynthesis (light-independent). Functionally, component of the dark-operative protochlorophyllide reductase (DPOR) that uses Mg-ATP and reduced ferredoxin to reduce ring D of protochlorophyllide (Pchlide) to form chlorophyllide a (Chlide). This reaction is light-independent. The NB-protein (ChlN-ChlB) is the catalytic component of the complex. The protein is Light-independent protochlorophyllide reductase subunit N of Prochlorococcus marinus (strain MIT 9215).